The following is a 560-amino-acid chain: Arginine--tRNA ligase (560 aa).

Residues 164-174 carry the 'HIGH' region motif; sequence FYYNDAGNQID.

Belongs to the class-I aminoacyl-tRNA synthetase family. Monomer.

It is found in the cytoplasm. It carries out the reaction tRNA(Arg) + L-arginine + ATP = L-arginyl-tRNA(Arg) + AMP + diphosphate. The chain is Arginine--tRNA ligase from Bordetella pertussis (strain Tohama I / ATCC BAA-589 / NCTC 13251).